Consider the following 163-residue polypeptide: 6,7-dimethyl-8-ribityllumazine synthase (163 aa).

Residues F27, 58-60, and 87-89 each bind 5-amino-6-(D-ribitylamino)uracil; these read ALE and CVI. Residue 92-93 participates in (2S)-2-hydroxy-3-oxobutyl phosphate binding; the sequence is DT. Residue H95 is the Proton donor of the active site. N120 contributes to the 5-amino-6-(D-ribitylamino)uracil binding site. Position 134 (R134) interacts with (2S)-2-hydroxy-3-oxobutyl phosphate.

The protein belongs to the DMRL synthase family.

The catalysed reaction is (2S)-2-hydroxy-3-oxobutyl phosphate + 5-amino-6-(D-ribitylamino)uracil = 6,7-dimethyl-8-(1-D-ribityl)lumazine + phosphate + 2 H2O + H(+). It functions in the pathway cofactor biosynthesis; riboflavin biosynthesis; riboflavin from 2-hydroxy-3-oxobutyl phosphate and 5-amino-6-(D-ribitylamino)uracil: step 1/2. Its function is as follows. Catalyzes the formation of 6,7-dimethyl-8-ribityllumazine by condensation of 5-amino-6-(D-ribitylamino)uracil with 3,4-dihydroxy-2-butanone 4-phosphate. This is the penultimate step in the biosynthesis of riboflavin. The polypeptide is 6,7-dimethyl-8-ribityllumazine synthase (Afipia carboxidovorans (strain ATCC 49405 / DSM 1227 / KCTC 32145 / OM5) (Oligotropha carboxidovorans)).